The chain runs to 112 residues: Small ribosomal subunit protein bS6 (112 aa).

It belongs to the bacterial ribosomal protein bS6 family.

Functionally, binds together with bS18 to 16S ribosomal RNA. The chain is Small ribosomal subunit protein bS6 from Chlamydia trachomatis serovar L2 (strain ATCC VR-902B / DSM 19102 / 434/Bu).